Consider the following 982-residue polypeptide: Bifunctional glutamine synthetase adenylyltransferase/adenylyl-removing enzyme (982 aa).

Residues 1–460 form an adenylyl removase region; sequence MSLPSLANLP…HFRQVIADPD (460 aa). The tract at residues 473 to 982 is adenylyl transferase; that stretch reads GAEWIPLWEE…IRIWRELRLG (510 aa).

Belongs to the GlnE family. Mg(2+) is required as a cofactor.

The enzyme catalyses [glutamine synthetase]-O(4)-(5'-adenylyl)-L-tyrosine + phosphate = [glutamine synthetase]-L-tyrosine + ADP. The catalysed reaction is [glutamine synthetase]-L-tyrosine + ATP = [glutamine synthetase]-O(4)-(5'-adenylyl)-L-tyrosine + diphosphate. Its function is as follows. Involved in the regulation of glutamine synthetase GlnA, a key enzyme in the process to assimilate ammonia. When cellular nitrogen levels are high, the C-terminal adenylyl transferase (AT) inactivates GlnA by covalent transfer of an adenylyl group from ATP to specific tyrosine residue of GlnA, thus reducing its activity. Conversely, when nitrogen levels are low, the N-terminal adenylyl removase (AR) activates GlnA by removing the adenylyl group by phosphorolysis, increasing its activity. The regulatory region of GlnE binds the signal transduction protein PII (GlnB) which indicates the nitrogen status of the cell. The sequence is that of Bifunctional glutamine synthetase adenylyltransferase/adenylyl-removing enzyme from Pseudomonas aeruginosa (strain ATCC 15692 / DSM 22644 / CIP 104116 / JCM 14847 / LMG 12228 / 1C / PRS 101 / PAO1).